The following is a 345-amino-acid chain: MEHTHAHLAANSSACGLGFVPVVYYSFLLCLGLPANILTVIILSQLVARRQKSSYNYLLALAAADILVLFFIVFVDFLLEDFILTMQMPLIPDKIIEVLEFSSIHTSIWITVPLTVDRYIAVCHPLKYHTVSYPARTRKVILSVYITCFLTSIPYYWWPNIWTEDYISTSMHHVLVWIHCFTVYLVPCSIFFILNSIIVYKLRRKSNFRLRGYSTGKTTAILFTITSIFATLWAPRIIMILYHLYGAPIQNPWLVHIMLDVANMLALLNTAINFFLYCFISKRFRTMAAATLKALFKCQKQPVQFYTNHNFSITSSPWISPANSHCIKMLVYQYDKHGKPIKVSP.

The Extracellular segment spans residues 1 to 21 (MEHTHAHLAANSSACGLGFVP). Residue N11 is glycosylated (N-linked (GlcNAc...) asparagine). The helical transmembrane segment at 22–42 (VVYYSFLLCLGLPANILTVII) threads the bilayer. Topologically, residues 43–57 (LSQLVARRQKSSYNY) are cytoplasmic. The chain crosses the membrane as a helical span at residues 58–78 (LLALAAADILVLFFIVFVDFL). Residues 79–94 (LEDFILTMQMPLIPDK) are Extracellular-facing. The helical transmembrane segment at 95–115 (IIEVLEFSSIHTSIWITVPLT) threads the bilayer. Topologically, residues 116–140 (VDRYIAVCHPLKYHTVSYPARTRKV) are cytoplasmic. Residues 141–161 (ILSVYITCFLTSIPYYWWPNI) form a helical membrane-spanning segment. Residues 162-173 (WTEDYISTSMHH) are Extracellular-facing. A helical membrane pass occupies residues 174 to 194 (VLVWIHCFTVYLVPCSIFFIL). Residues 195-220 (NSIIVYKLRRKSNFRLRGYSTGKTTA) lie on the Cytoplasmic side of the membrane. Residues 221 to 241 (ILFTITSIFATLWAPRIIMIL) form a helical membrane-spanning segment. At 242–260 (YHLYGAPIQNPWLVHIMLD) the chain is on the extracellular side. A helical transmembrane segment spans residues 261–281 (VANMLALLNTAINFFLYCFIS). At 282 to 345 (KRFRTMAAAT…KHGKPIKVSP (64 aa)) the chain is on the cytoplasmic side.

It belongs to the G-protein coupled receptor 1 family. As to expression, expressed almost exclusively in the brain. Abundantly expressed in the ventrolateral region of caudate putamen, the habenular nucleus, the zona incerta, and the medial mammillary nucleus.

The protein localises to the cell membrane. Orphan receptor. Seems to act through a G(q/11)-mediated pathway. In Mus musculus (Mouse), this protein is Probable G-protein coupled receptor 139 (Gpr139).